The chain runs to 178 residues: CDP-diacylglycerol--glycerol-3-phosphate 3-phosphatidyltransferase (178 aa).

A run of 4 helical transmembrane segments spans residues 5 to 25 (PNYL…LFYI), 32 to 52 (KLGA…GYIA), 61 to 81 (FGKM…TIML), and 145 to 165 (IIYL…LTII).

This sequence belongs to the CDP-alcohol phosphatidyltransferase class-I family.

It localises to the cell membrane. It carries out the reaction a CDP-1,2-diacyl-sn-glycerol + sn-glycerol 3-phosphate = a 1,2-diacyl-sn-glycero-3-phospho-(1'-sn-glycero-3'-phosphate) + CMP + H(+). It participates in phospholipid metabolism; phosphatidylglycerol biosynthesis; phosphatidylglycerol from CDP-diacylglycerol: step 1/2. This protein catalyzes the committed step to the synthesis of the acidic phospholipids. The sequence is that of CDP-diacylglycerol--glycerol-3-phosphate 3-phosphatidyltransferase (pgsA) from Rickettsia typhi (strain ATCC VR-144 / Wilmington).